A 257-amino-acid polypeptide reads, in one-letter code: Zinc transporter ZupT (257 aa).

The next 8 membrane-spanning stretches (helical) occupy residues 5 to 25 (LILT…GVLG), 32 to 52 (VLAF…LMEM), 61 to 81 (GMSP…YFGL), 109 to 129 (AILL…ATFV), 137 to 157 (LGFG…LAVA), 171 to 191 (IFWA…AWLI), 195 to 215 (LVSP…MVAL), and 236 to 256 (GVLC…TIGI). Fe(2+)-binding residues include N120 and E123. The Zn(2+) site is built by E123 and H148. Fe(2+) contacts are provided by N149, E152, and E181. A Zn(2+)-binding site is contributed by E152.

It belongs to the ZIP transporter (TC 2.A.5) family. ZupT subfamily.

Its subcellular location is the cell inner membrane. It catalyses the reaction Zn(2+)(in) = Zn(2+)(out). Functionally, mediates zinc uptake. May also transport other divalent cations. The sequence is that of Zinc transporter ZupT from Salmonella agona (strain SL483).